A 544-amino-acid polypeptide reads, in one-letter code: Methionine--tRNA ligase (544 aa).

The short motif at 10 to 20 is the 'HIGH' region element; that stretch reads PYANGSLHLGH. Zn(2+) contacts are provided by cysteine 141, cysteine 144, cysteine 153, and cysteine 156. The short motif at 329 to 333 is the 'KMSKS' region element; the sequence is KLSTS. Threonine 332 serves as a coordination point for ATP.

Belongs to the class-I aminoacyl-tRNA synthetase family. MetG type 1 subfamily. Monomer. The cofactor is Zn(2+).

The protein localises to the cytoplasm. It catalyses the reaction tRNA(Met) + L-methionine + ATP = L-methionyl-tRNA(Met) + AMP + diphosphate. Functionally, is required not only for elongation of protein synthesis but also for the initiation of all mRNA translation through initiator tRNA(fMet) aminoacylation. This is Methionine--tRNA ligase from Bacillus cereus (strain 03BB102).